A 331-amino-acid polypeptide reads, in one-letter code: Probable allantoicase (331 aa).

It belongs to the allantoicase family.

The catalysed reaction is allantoate + H2O = (S)-ureidoglycolate + urea. Its pathway is nitrogen metabolism; (S)-allantoin degradation; (S)-ureidoglycolate from allantoate (aminidohydrolase route): step 1/1. This chain is Probable allantoicase, found in Stutzerimonas stutzeri (strain A1501) (Pseudomonas stutzeri).